Reading from the N-terminus, the 368-residue chain is MNFKGYSDYRHDTVARIGVLVASLGTPEAPTASAVRRFLASFLSDPRVVELPRPLWWLILHGIILRIRPSPVARLYQSIWREDGSPLLSFARRVGQSLQAELDSRGRSIEIRLGMRHGSPSIETALEELRQSGAQRLLVFPLYPQYSGSTTGSTFDAVAQVLSTWRWVPELRMIAQYHDHSGYLEALAETIRRSWKEAGRGERLLISFHGLPKRYLLAGDPYHCQCQKTARLLAERLGLKEGEWQIAFQSRFGREEWLKPYADHLLQAWAEAGIKRVDVVCPGFAVDCLETLEEMAQRNRELFLHAGGEEYRYIPALNDESAHIRALTDLVEQHIQGWSEADLGGGREATGQAAERSRQRALALGAKQ.

Residues His-209 and Glu-290 each contribute to the Fe cation site. Residues 341 to 368 (ADLGGGREATGQAAERSRQRALALGAKQ) form a disordered region.

Belongs to the ferrochelatase family.

The protein resides in the cytoplasm. It carries out the reaction heme b + 2 H(+) = protoporphyrin IX + Fe(2+). The protein operates within porphyrin-containing compound metabolism; protoheme biosynthesis; protoheme from protoporphyrin-IX: step 1/1. Catalyzes the ferrous insertion into protoporphyrin IX. This is Ferrochelatase from Nitrosococcus oceani (strain ATCC 19707 / BCRC 17464 / JCM 30415 / NCIMB 11848 / C-107).